Reading from the N-terminus, the 215-residue chain is Small ribosomal subunit protein uS3 (215 aa).

The region spanning 38–106 (LRAFLKKKLF…EVLIDIQEIR (69 aa)) is the KH type-2 domain.

Belongs to the universal ribosomal protein uS3 family. In terms of assembly, part of the 30S ribosomal subunit. Forms a tight complex with proteins S10 and S14.

Its function is as follows. Binds the lower part of the 30S subunit head. Binds mRNA in the 70S ribosome, positioning it for translation. This Desulforapulum autotrophicum (strain ATCC 43914 / DSM 3382 / VKM B-1955 / HRM2) (Desulfobacterium autotrophicum) protein is Small ribosomal subunit protein uS3.